Here is a 286-residue protein sequence, read N- to C-terminus: NAD kinase (286 aa).

Catalysis depends on Asp68, which acts as the Proton acceptor. NAD(+) contacts are provided by residues 68-69 (DG), Lys73, 142-143 (ND), Arg153, Asp172, 183-188 (TGYSFS), and Gln242.

Belongs to the NAD kinase family. A divalent metal cation serves as cofactor.

The protein resides in the cytoplasm. It carries out the reaction NAD(+) + ATP = ADP + NADP(+) + H(+). Involved in the regulation of the intracellular balance of NAD and NADP, and is a key enzyme in the biosynthesis of NADP. Catalyzes specifically the phosphorylation on 2'-hydroxyl of the adenosine moiety of NAD to yield NADP. This is NAD kinase from Natranaerobius thermophilus (strain ATCC BAA-1301 / DSM 18059 / JW/NM-WN-LF).